The following is a 180-amino-acid chain: Magnetosome protein MamS (180 aa).

Over 1–21 the chain is Cytoplasmic; it reads MDFRPDQVVARIRGAVEGALT. The chain crosses the membrane as a helical span at residues 22 to 42; the sequence is AQSVLGIGGALVLILVVIALL. Topologically, residues 43-180 are lumenal; sequence PDRFTRGEGK…EGLALWMTVQ (138 aa).

It belongs to the magnetosome MamS family.

The protein resides in the magnetosome membrane. Functionally, may play a role in magnetite crystal growth and size. The chain is Magnetosome protein MamS from Magnetospirillum gryphiswaldense (strain DSM 6361 / JCM 21280 / NBRC 15271 / MSR-1).